A 341-amino-acid chain; its full sequence is L-threonine 3-dehydrogenase (341 aa).

Cys-38 contacts Zn(2+). Residues Thr-40 and His-43 each act as charge relay system in the active site. 6 residues coordinate Zn(2+): His-63, Glu-64, Cys-93, Cys-96, Cys-99, and Cys-107. Residues Ile-175, Asp-195, Arg-200, 262–264, and 286–287 contribute to the NAD(+) site; these read LGI and IY.

Belongs to the zinc-containing alcohol dehydrogenase family. In terms of assembly, homotetramer. Requires Zn(2+) as cofactor.

It localises to the cytoplasm. It carries out the reaction L-threonine + NAD(+) = (2S)-2-amino-3-oxobutanoate + NADH + H(+). It participates in amino-acid degradation; L-threonine degradation via oxydo-reductase pathway; glycine from L-threonine: step 1/2. Its function is as follows. Catalyzes the NAD(+)-dependent oxidation of L-threonine to 2-amino-3-ketobutyrate. The sequence is that of L-threonine 3-dehydrogenase from Shigella dysenteriae serotype 1 (strain Sd197).